The following is a 600-amino-acid chain: Chaperone protein DnaK (600 aa).

Thr175 bears the Phosphothreonine; by autocatalysis mark. The segment covering 569-578 has biased composition (low complexity); it reads SFAQATAQQA. Residues 569–600 form a disordered region; the sequence is SFAQATAQQANTSESDPKADDSNTIDAEIKQD. Residues 583 to 600 show a composition bias toward basic and acidic residues; that stretch reads SDPKADDSNTIDAEIKQD.

The protein belongs to the heat shock protein 70 family.

Functionally, acts as a chaperone. This is Chaperone protein DnaK from Mesomycoplasma hyopneumoniae (strain 7448) (Mycoplasma hyopneumoniae).